The chain runs to 86 residues: Small ribosomal subunit protein uS17 (86 aa).

This sequence belongs to the universal ribosomal protein uS17 family. Part of the 30S ribosomal subunit.

Functionally, one of the primary rRNA binding proteins, it binds specifically to the 5'-end of 16S ribosomal RNA. The sequence is that of Small ribosomal subunit protein uS17 from Dehalococcoides mccartyi (strain ATCC BAA-2266 / KCTC 15142 / 195) (Dehalococcoides ethenogenes (strain 195)).